The chain runs to 107 residues: Large ribosomal subunit protein bL21 (107 aa).

Belongs to the bacterial ribosomal protein bL21 family. As to quaternary structure, part of the 50S ribosomal subunit. Contacts protein L20.

In terms of biological role, this protein binds to 23S rRNA in the presence of protein L20. The protein is Large ribosomal subunit protein bL21 of Buchnera aphidicola subsp. Schizaphis graminum (strain Sg).